A 238-amino-acid chain; its full sequence is RAD9, HUS1, RAD1-interacting nuclear orphan protein 1 (238 aa).

A compositionally biased stretch (basic residues) spans 1 to 10; it reads MPPRKKRRQP. A disordered region spans residues 1 to 31; sequence MPPRKKRRQPSQKAPLLFHQQPLEGPKHSCA. At S51 the chain carries Phosphoserine; by PLK1. The RAD1-binding motif motif lies at 55–61; the sequence is SWVSPDF. The segment at 74-105 is disordered; it reads KHQNRARHSSRKPTTSKFPHLTFESPQSSSSE. Over residues 75–84 the composition is skewed to basic residues; the sequence is HQNRARHSSR. The D-box signature appears at 125–132; sequence RRPLVPVL. Positions 174–178 match the KEN box motif; the sequence is QKENS.

In terms of assembly, interacts (when phosphorylated by PLK1) with POLQ; promoting POLQ recruitment to DNA damage sites. Interacts with RAD1; interaction is direct and promotes association with the 9-1-1 (RAD9-RAD1-HUS1) complex. Interacts with RAD18. Interacts with TOPBP1. Interacts with UBE2N. Phosphorylated at Ser-51 by PLK1, promoting interaction with polymerase theta (POLQ). In terms of processing, ubiquitinated and degraded by the APC/C complex upon mitotic exit. Weakly expressed in testis, prostate, ovary, thymus and small intestine. Expressed strongly in breast cancer cells.

Its subcellular location is the nucleus. It is found in the chromosome. In terms of biological role, involved in microhomology-mediated end-joining (MMEJ) DNA repair by promoting recruitment of polymerase theta (POLQ) to DNA damage sites during mitosis. MMEJ is an alternative non-homologous end-joining (NHEJ) machinery that takes place during mitosis to repair double-strand breaks in DNA that originate in S-phase. Accumulates in M-phase; following phosphorylation by PLK1, interacts with POLQ, enabling its recruitment to double-strand breaks for subsequent repair. Also involved in the DNA damage response (DDR) signaling in response to genotoxic stresses such as ionizing radiation (IR) during the S phase. Recruited to sites of DNA damage through interaction with the 9-1-1 cell-cycle checkpoint response complex and TOPBP1 in a ATR-dependent manner. Required for the progression of the G1 to S phase transition. Plays a role in the stimulation of CHEK1 phosphorylation. The chain is RAD9, HUS1, RAD1-interacting nuclear orphan protein 1 from Homo sapiens (Human).